Reading from the N-terminus, the 493-residue chain is Galactose-1-phosphate uridylyltransferase (493 aa).

This sequence belongs to the galactose-1-phosphate uridylyltransferase type 2 family.

It localises to the cytoplasm. It carries out the reaction alpha-D-galactose 1-phosphate + UDP-alpha-D-glucose = alpha-D-glucose 1-phosphate + UDP-alpha-D-galactose. Its pathway is carbohydrate metabolism; galactose metabolism. In Streptococcus thermophilus, this protein is Galactose-1-phosphate uridylyltransferase (galT).